The following is a 147-amino-acid chain: UPAR/Ly6 domain-containing protein CG9338 (147 aa).

The first 23 residues, 1 to 23 (MVSSVKMILALTVLATVACTGYA), serve as a signal peptide directing secretion. Residues 24-126 (IKCYQCDSLT…VCTEDECNGT (103 aa)) lie on the Extracellular side of the membrane. Disulfide bonds link Cys26–Cys72, Cys29–Cys37, Cys51–Cys89, Cys101–Cys115, and Cys118–Cys123. Asn68 carries N-linked (GlcNAc...) asparagine glycosylation. Residue Asn124 is the site of GPI-anchor amidated asparagine attachment. The propeptide at 125 to 147 (GTSSLAPIAGVILLFFGLARLLA) is removed in mature form. A helical transmembrane segment spans residues 127–147 (SSLAPIAGVILLFFGLARLLA).

This sequence belongs to the quiver family.

The protein localises to the cell membrane. In terms of biological role, may be involved in regulating neuron excitability. This is UPAR/Ly6 domain-containing protein CG9338 from Drosophila melanogaster (Fruit fly).